The chain runs to 570 residues: MHRHILILFLFGCLSADQRLSSTSISSMNGFSTTRKCEHITIPMCKNLDYNQTVFPNLLGHTTQSEAGPAIAQFNPLIKVKCSEDIRLFLCTVYAPVCTVLEKPIQPCRELCLSAKNGCESLMKKFGFQWPDQLDCNKFPVTDLCVGKNSSESSNSKNYRSSNDVTFGVSTIANEVVLSPKKCPHHMHTTSGSHFSLPLLSGRLPECSLTCEADNQVPMMFDGRVRRILRIWTAAWSVACFVCSLFTLVTFLVDLSRFAYPVRPILYLAFCYLAISTVYMIGVVGEDGFACGTYGSTPTTLVTQGGENVGCSALAVVHYFFFMSSCAWWLVLCLAWFLAANLKWGAESIAALSPYFHAMCWGVPAVLSVTVLVTNSVDGDVFTGICSVGNLNPSALVYFFFTPIVVSLALGAVLLVCGIWSMIRIRSYIKLQHADVERNISKLEKLMLRIGAFAIMYSLPTAMNAAIMWYQAVNMPAWLEGWLHHRCVRLQDRELFGFTYPVDDCPMDPKVAAPEIIVFLLKYVSQLVVGITCAIWVVSSKTLSSYHKAYLALSSRSPTVPAHVDQVNMR.

An N-terminal signal peptide occupies residues Met-1–Ala-16. Over Asp-17–Arg-230 the chain is Extracellular. One can recognise an FZ domain in the interval Ser-32 to Lys-148. 5 cysteine pairs are disulfide-bonded: Cys-37–Cys-98, Cys-45–Cys-91, Cys-82–Cys-119, Cys-108–Cys-145, and Cys-112–Cys-136. Residue Asn-51 is glycosylated (N-linked (GlcNAc...) asparagine). Asn-149 carries N-linked (GlcNAc...) asparagine glycosylation. A helical membrane pass occupies residues Ile-231 to Phe-251. Over Leu-252–Pro-264 the chain is Cytoplasmic. Residues Ile-265–Gly-285 form a helical membrane-spanning segment. Topologically, residues Glu-286–Tyr-319 are extracellular. The chain crosses the membrane as a helical span at residues Phe-320–Ala-340. The Cytoplasmic segment spans residues Asn-341–Ser-348. Residues Ile-349–Val-369 form a helical membrane-spanning segment. The Extracellular portion of the chain corresponds to Thr-370–Ala-395. The helical transmembrane segment at Leu-396 to Val-416 threads the bilayer. The Cytoplasmic segment spans residues Cys-417–Arg-449. A helical transmembrane segment spans residues Ile-450–Tyr-470. Topologically, residues Gln-471 to Glu-515 are extracellular. A helical membrane pass occupies residues Ile-516 to Trp-536. Residues Val-537 to Arg-570 lie on the Cytoplasmic side of the membrane.

It belongs to the G-protein coupled receptor Fz/Smo family.

Its subcellular location is the cell membrane. It localises to the early endosome. In terms of biological role, receptor for Wnt proteins. Most frizzled receptors are coupled to the beta-catenin canonical signaling pathway, which leads to the activation of disheveled proteins, inhibition of gsk-3 kinase, nuclear accumulation of beta-catenin and activation of Wnt target genes. A second signaling pathway involving PKC and calcium fluxes has been seen for some family members, but it is not yet clear if it represents a distinct pathway or if it can be integrated in the canonical pathway, as pkc seems to be required for Wnt-mediated inactivation of gsk-3 kinase. Both pathways seem to involve interactions with G-proteins. Required in embryonic development for the correct positioning and orientation of the mitotic spindles and division planes in blastomere cells. During early embryonic cell divisions, directs the asymmetric positioning of transcription factors such as pop-1 and dsh-2 in daughter cells in order to determine cell fate specification. Acts redundantly with other Wnt receptors such as lin-17 to control vulval precursor cell specification and also the polarity of different cell types including distal tip cells, seam cells, AVG interneurons and P-cells and their descendants. Plays a role in the migration of cell types including distal tip cells and the QR neuroblast descendants, QR.p and QR.pa during larval development. Negatively regulates the unc-6/Netrin receptors unc-5 and unc-40 to control distal tip cell polarity and migration. Acts through ced-5/DOCK180 and ced-10/Rac to control both distal tip cell migration and the phagocytic clearance of apoptotic cell corpses. Furthermore, it is also required for the migration and axon guidance of the different neuronal cell types including CAN, ALM, HSN and the two mechanosensory neurons AVM and PVM. Mediates Wnt receptor cfz-2 in directing ALM migration, but may also act redundantly with the Wnt receptors cfz-2 and mig-1 to direct the migration of other neuronal cell types including CAN and HSN. Mediates Wnt ligand egl-20 in the control of the anterior-posterior axon guidance of AVM and PVM neurons. This Caenorhabditis elegans protein is Protein mom-5.